Reading from the N-terminus, the 212-residue chain is Thymidylate kinase (212 aa).

Residue 10-17 (GLEGAGKT) participates in ATP binding.

The protein belongs to the thymidylate kinase family.

The enzyme catalyses dTMP + ATP = dTDP + ADP. Functionally, phosphorylation of dTMP to form dTDP in both de novo and salvage pathways of dTTP synthesis. This Photorhabdus laumondii subsp. laumondii (strain DSM 15139 / CIP 105565 / TT01) (Photorhabdus luminescens subsp. laumondii) protein is Thymidylate kinase.